A 167-amino-acid polypeptide reads, in one-letter code: 2-C-methyl-D-erythritol 2,4-cyclodiphosphate synthase (167 aa).

A divalent metal cation-binding residues include Asp-15 and His-17. Residues 15–17 (DIH) and 43–44 (HS) each bind 4-CDP-2-C-methyl-D-erythritol 2-phosphate. Residue His-51 coordinates a divalent metal cation. Residues 65-67 (DIG), 141-144 (TTNE), and Arg-151 contribute to the 4-CDP-2-C-methyl-D-erythritol 2-phosphate site.

It belongs to the IspF family. In terms of assembly, homotrimer. The cofactor is a divalent metal cation.

It carries out the reaction 4-CDP-2-C-methyl-D-erythritol 2-phosphate = 2-C-methyl-D-erythritol 2,4-cyclic diphosphate + CMP. Its pathway is isoprenoid biosynthesis; isopentenyl diphosphate biosynthesis via DXP pathway; isopentenyl diphosphate from 1-deoxy-D-xylulose 5-phosphate: step 4/6. Involved in the biosynthesis of isopentenyl diphosphate (IPP) and dimethylallyl diphosphate (DMAPP), two major building blocks of isoprenoid compounds. Catalyzes the conversion of 4-diphosphocytidyl-2-C-methyl-D-erythritol 2-phosphate (CDP-ME2P) to 2-C-methyl-D-erythritol 2,4-cyclodiphosphate (ME-CPP) with a corresponding release of cytidine 5-monophosphate (CMP). This chain is 2-C-methyl-D-erythritol 2,4-cyclodiphosphate synthase, found in Prochlorococcus marinus (strain MIT 9312).